Reading from the N-terminus, the 177-residue chain is Cyclic pyranopterin monophosphate synthase (177 aa).

Residues 89-91 and 125-126 each bind substrate; these read LCH and ME. The active site involves Asp140.

It belongs to the MoaC family. In terms of assembly, homohexamer; trimer of dimers.

It catalyses the reaction (8S)-3',8-cyclo-7,8-dihydroguanosine 5'-triphosphate = cyclic pyranopterin phosphate + diphosphate. It participates in cofactor biosynthesis; molybdopterin biosynthesis. In terms of biological role, catalyzes the conversion of (8S)-3',8-cyclo-7,8-dihydroguanosine 5'-triphosphate to cyclic pyranopterin monophosphate (cPMP). The polypeptide is Cyclic pyranopterin monophosphate synthase (Streptomyces griseus subsp. griseus (strain JCM 4626 / CBS 651.72 / NBRC 13350 / KCC S-0626 / ISP 5235)).